Reading from the N-terminus, the 123-residue chain is Small ribosomal subunit protein uS12cz/uS12cy (123 aa).

The protein belongs to the universal ribosomal protein uS12 family. As to quaternary structure, part of the 30S ribosomal subunit.

Its subcellular location is the plastid. It is found in the chloroplast. With S4 and S5 plays an important role in translational accuracy. Located at the interface of the 30S and 50S subunits. The chain is Small ribosomal subunit protein uS12cz/uS12cy (rps12-A) from Coffea arabica (Arabian coffee).